A 302-amino-acid polypeptide reads, in one-letter code: Probable proteasome inhibitor (302 aa).

Alanine 2 carries the post-translational modification N-acetylalanine. 2 disordered regions span residues 151 to 188 (LDGK…QIHP) and 259 to 302 (ARFD…SDFI). The span at 259-269 (ARFDPYGPPGV) shows a compositional bias: pro residues.

This sequence belongs to the proteasome inhibitor PI31 family.

In terms of biological role, could play an important role in control of proteasome function. Inhibits the hydrolysis of protein and peptide substrates by the 20S proteasome. The chain is Probable proteasome inhibitor from Arabidopsis thaliana (Mouse-ear cress).